Consider the following 311-residue polypeptide: Ribonuclease HIII (311 aa).

An RNase H type-2 domain is found at 95 to 311 (MSIVGSDEVG…NTEKAFRLLK (217 aa)). A divalent metal cation-binding residues include aspartate 101, glutamate 102, and aspartate 206.

It belongs to the RNase HII family. RnhC subfamily. It depends on Mn(2+) as a cofactor. The cofactor is Mg(2+).

It localises to the cytoplasm. The catalysed reaction is Endonucleolytic cleavage to 5'-phosphomonoester.. Its function is as follows. Endonuclease that specifically degrades the RNA of RNA-DNA hybrids. The polypeptide is Ribonuclease HIII (Bacillus cereus (strain AH187)).